Consider the following 234-residue polypeptide: MFSFKQFSVQQDKTAMKVGTDGVLLGAWTPINHNPISILDIGAGTGLIALMLAQRTSAVQIDALEIDEEAYEQATDNFENSPWSDRLFCYHAGLDEFVEEPEDEYDLIVCNPPFYAENYKTNSEQRDLARFSDAMPFEELIEAADLLLSENGILSVIIPYKEEEKFVTLANEFELYPIKITRVKGTPTSETKRSLLVFSRNKQNCEQDILVIETDRHVYTKEYIALTKGFYLKM.

The protein belongs to the methyltransferase superfamily. tRNA (adenine-N(6)-)-methyltransferase family.

Its subcellular location is the cytoplasm. The catalysed reaction is adenosine(37) in tRNA1(Val) + S-adenosyl-L-methionine = N(6)-methyladenosine(37) in tRNA1(Val) + S-adenosyl-L-homocysteine + H(+). In terms of biological role, specifically methylates the adenine in position 37 of tRNA(1)(Val) (anticodon cmo5UAC). The polypeptide is tRNA1(Val) (adenine(37)-N6)-methyltransferase (Flavobacterium psychrophilum (strain ATCC 49511 / DSM 21280 / CIP 103535 / JIP02/86)).